The primary structure comprises 69 residues: uncharacterized protein (69 aa).

This is an uncharacterized protein from Saccharomyces cerevisiae (strain ATCC 204508 / S288c) (Baker's yeast).